Here is a 95-residue protein sequence, read N- to C-terminus: MTKSELIEKLATRQSQLSAKEVESAIKEMLEQMATTLEGGDRIEIRGFGSFSLHYRAPRTGRNPKTGTSVELEGKYVPHFKPGKELRERVDAINS.

This sequence belongs to the bacterial histone-like protein family. As to quaternary structure, heterodimer of an alpha and a beta chain.

In terms of biological role, this protein is one of the two subunits of integration host factor, a specific DNA-binding protein that functions in genetic recombination as well as in transcriptional and translational control. The protein is Integration host factor subunit beta of Shewanella loihica (strain ATCC BAA-1088 / PV-4).